The following is a 218-amino-acid chain: Alkylmercury lyase (218 aa).

It belongs to the MerB family.

The enzyme catalyses an alkylmercury + H(+) = an alkane + Hg(2+). Its function is as follows. Cleaves the carbon-mercury bond of organomercurials such as phenylmercuric acetate. One product is Hg(2+), which is subsequently detoxified by the mercuric reductase. This chain is Alkylmercury lyase, found in Clostridium butyricum.